Reading from the N-terminus, the 2590-residue chain is DNA polymerase theta (2590 aa).

Residues 1–12 (MNLLRRSGKRRR) are compositionally biased toward basic residues. The disordered stretch occupies residues 1–33 (MNLLRRSGKRRRSESGSDSFSGSGGDSSASPQF). Residues 16–30 (GSDSFSGSGGDSSAS) show a composition bias toward low complexity. ATP contacts are provided by residues glutamine 96 and 115–122 (APTSAGKT). The 185-residue stretch at 102–286 (LGQVLEGKNL…WLNAELYHTD (185 aa)) folds into the Helicase ATP-binding domain. The interval 102–554 (LGQVLEGKNL…STSQDMHTYA (453 aa)) is helicase activity. The DEAH box signature appears at 216 to 219 (DELH). Positions 321 to 554 (GDEDHVVSLC…STSQDMHTYA (234 aa)) constitute a Helicase C-terminal domain. The interaction with RAD51 stretch occupies residues 847 to 894 (DEEEEAVEERRNMRTIWVTGRKGLTEREAAALIVEEARMILQQDLVEM). Lysine 990 is subject to N6-acetyllysine. A disordered region spans residues 1034-1060 (KMSRSFRSWKRRKHLKRSRDSSPLKDS). Positions 1040–1050 (RSWKRRKHLKR) are enriched in basic residues. Phosphoserine; by PLK1 is present on residues serine 1289, serine 1482, serine 1486, serine 1488, serine 1493, serine 1555, and serine 1563. The disordered stretch occupies residues 1594-1622 (SDPVLDEHHQGDQDGGDQDERAEKSKLTG). A compositionally biased stretch (basic and acidic residues) spans 1598 to 1619 (LDEHHQGDQDGGDQDERAEKSK). A phosphoserine; by PLK1 mark is found at serine 1628 and serine 1635. A Phosphothreonine; by PLK1 modification is found at threonine 1755. A disordered region spans residues 1777–1797 (PSDIKNHDLSPGSRNGFKDNS). Residues 2097 to 2584 (AECESQKHIM…KVKIGASWGE (488 aa)) form a DNA polymerase activity region. Loop stretches follow at residues 2142-2177 (KLPP…GRQF) and 2257-2322 (EIKM…VPFP). The Mg(2+) site is built by aspartate 2330 and tyrosine 2331. Residues 2491 to 2535 (QLETFHSTFKSHGHREGMLQSDQTGLSRKRKLQGMFCPIRGGFFI) are loop 3. Position 2540 (aspartate 2540) interacts with Mg(2+).

Belongs to the DNA polymerase type-A family. In terms of assembly, homomultimer; forms homodimers and homotetramers. Interacts with RAD51. Interacts with ORC2 and ORC4. Interacts with RHNO1; interaction takes place during mitosis and promotes POLQ recruitment to DNA damage sites. Interacts (when phosphorylated) with TOPBP1 (via BRCT domains 7 and 8); promoting POLQ recruitment to DNA damage sites. The cofactor is Mg(2+). Post-translationally, phosphorylated by PLK1; promoting interaction with TOPBP1 and recruitment to DNA damage sites. Highly expressed in testis.

The protein localises to the nucleus. It localises to the chromosome. It catalyses the reaction DNA(n) + a 2'-deoxyribonucleoside 5'-triphosphate = DNA(n+1) + diphosphate. It carries out the reaction ATP + H2O = ADP + phosphate + H(+). Its activity is regulated as follows. Specifically inhibited by the antibiotic novobiocin. The polymerase activity is specifically inhibited by the small molecule ART558. Novobiocin and ART558 confer specific killing of BRCA1/2-deficient cells and synergize with the poly [ADP-ribose] polymerase (PARP) inhibitor olaparib. Its function is as follows. Low-fidelity DNA polymerase with a helicase activity that promotes microhomology-mediated end-joining (MMEJ), an alternative non-homologous end-joining (NHEJ) machinery required to repair double-strand breaks in DNA during mitosis. MMEJ is an error-prone repair pathway that produces deletions of sequences from the strand being repaired and promotes genomic rearrangements, such as telomere fusions, some of them leading to cellular transformation. MMEJ is required during mitosis to repair persistent double-strand breaks that originate in S-phase. Although error-prone, MMEJ protects against chromosomal instability and tumorigenesis. The polymerase acts by binding directly the 2 ends of resected double-strand breaks, allowing microhomologous sequences in the overhangs to form base pairs. It then extends each strand from the base-paired region using the opposing overhang as a template. Requires partially resected DNA containing 2 to 6 base pairs of microhomology to perform MMEJ. The polymerase lacks proofreading activity and is highly promiscuous: unlike most polymerases, promotes extension of ssDNA and partial ssDNA (pssDNA) substrates. When the ends of a break do not contain terminal microhomology must identify embedded complementary sequences through a scanning step. Also acts as a DNA helicase, promoting dissociation of the replication protein A complex (RPA/RP-A), composed of RPA1, RPA2 and RPA3, from resected double-strand breaks to allow their annealing and subsequent joining by MMEJ. Removal of RPA/RP-A complex proteins prevents RAD51 accumulation at resected ends, thereby inhibiting homology-recombination repair (HR) pathway. Also shows RNA-directed DNA polymerase activity to mediate DNA repair in vitro; however this activity needs additional evidence in vivo. May also have lyase activity. Involved in somatic hypermutation of immunoglobulin genes, a process that requires the activity of DNA polymerases to ultimately introduce mutations at both A/T and C/G base pairs. POLQ-mediated end joining activity is involved in random integration of exogenous DNA hampers. This chain is DNA polymerase theta, found in Homo sapiens (Human).